A 235-amino-acid chain; its full sequence is Uracil-DNA glycosylase (235 aa).

Residue Asp71 is the Proton acceptor of the active site.

This sequence belongs to the uracil-DNA glycosylase (UDG) superfamily. UNG family.

The protein localises to the cytoplasm. It carries out the reaction Hydrolyzes single-stranded DNA or mismatched double-stranded DNA and polynucleotides, releasing free uracil.. Its function is as follows. Excises uracil residues from the DNA which can arise as a result of misincorporation of dUMP residues by DNA polymerase or due to deamination of cytosine. In Campylobacter hominis (strain ATCC BAA-381 / DSM 21671 / CCUG 45161 / LMG 19568 / NCTC 13146 / CH001A), this protein is Uracil-DNA glycosylase.